Here is a 1465-residue protein sequence, read N- to C-terminus: Neuropathy target esterase sws (1465 aa).

The Lumenal portion of the chain corresponds to 1–34 (MDVLEMLRASASGSYNTIFSEAWCQYVSKQITAT). The helical transmembrane segment at 35 to 55 (MYMYCALGMMGVLFLAWFMYF) threads the bilayer. Residues 56 to 1465 (KRMARLRLRD…RSSANNETKN (1410 aa)) lie on the Cytoplasmic side of the membrane. Position 174–301 (174–301 (IFGHFEKPVF…IRVIQVIMIR (128 aa))) interacts with a nucleoside 3',5'-cyclic phosphate. 2 stretches are compositionally biased toward polar residues: residues 331–349 (STMSGPINSQTSQSSRQTP) and 434–454 (QQSVGNLSTRRSSITQMTPDG). Disordered stretches follow at residues 331-421 (STMS…TEVH) and 434-460 (QQSVGNLSTRRSSITQMTPDGSHSCPP). A phosphoserine mark is found at Ser446 and Ser455. Residues 484 to 611 (ELGL…VVRR) and 600 to 727 (IVLD…LSHR) contribute to the a nucleoside 3',5'-cyclic phosphate site. In terms of domain architecture, PNPLA spans 954–1120 (LVLGGGGARG…VNNLPGHLWR (167 aa)). A GXGXXG motif is present at residues 958-963 (GGGARG). Residues 985 to 989 (GVSIG) carry the GXSXG motif. Catalysis depends on Ser987, which acts as the Nucleophile. The active-site Proton acceptor is Asp1107. The DGA/G signature appears at 1107-1109 (DGG). The residue at position 1201 (Ser1201) is a Phosphoserine. The segment at 1371–1465 (LERKTDKSTQ…RSSANNETKN (95 aa)) is disordered. A compositionally biased stretch (low complexity) spans 1378-1390 (STQSSPPTSSRTS). Residues 1392–1402 (RGKEEARHMDN) are compositionally biased toward basic and acidic residues. Residues 1413-1424 (TGSGATEGIHTS) show a composition bias toward polar residues. A compositionally biased stretch (basic and acidic residues) spans 1447-1456 (VYKDEDKENR).

Belongs to the NTE family. Interacts with Pka-C3; interaction inhibits the catalytic function of Pka-C3 and the esterase activity of sws.

It is found in the endoplasmic reticulum membrane. The catalysed reaction is a 1-acyl-sn-glycero-3-phosphocholine + H2O = sn-glycerol 3-phosphocholine + a fatty acid + H(+). Its function is as follows. Phospholipase B that deacylates intracellular phosphatidylcholine (PtdCho), generating glycerophosphocholine (GroPtdCho). This deacylation occurs at both sn-2 and sn-1 positions of PtdCho. Its specific chemical modification by certain organophosphorus (OP) compounds leads to distal axonopathy. Plays a role in the signaling mechanism between neurons and glia that regulates glia wrapping during development of the adult brain. Essential for membrane lipid homeostasis and cell survival in both neurons and glia of the adult brain. The sequence is that of Neuropathy target esterase sws from Drosophila erecta (Fruit fly).